Here is a 601-residue protein sequence, read N- to C-terminus: Glutamine--tRNA ligase (601 aa).

A 'HIGH' region motif is present at residues 76-86 (PEPNGYLHIGH). ATP-binding positions include 77–79 (EPN) and 83–89 (HIGHAKS). 2 residues coordinate L-glutamine: Asp109 and Tyr253. ATP is bound by residues Thr272, 301–302 (RL), and 309–311 (MSK). The 'KMSKS' region motif lies at 308-312 (VMSKR).

This sequence belongs to the class-I aminoacyl-tRNA synthetase family. Monomer.

It is found in the cytoplasm. The catalysed reaction is tRNA(Gln) + L-glutamine + ATP = L-glutaminyl-tRNA(Gln) + AMP + diphosphate. The protein is Glutamine--tRNA ligase of Rhodopirellula baltica (strain DSM 10527 / NCIMB 13988 / SH1).